The following is a 290-amino-acid chain: uncharacterized protein (290 aa).

Positions 30–274 (PTILLLHGFP…YDTGHFALET (245 aa)) constitute an AB hydrolase-1 domain. Histidine 269 is an active-site residue.

This sequence belongs to the DmpD/TodF/XylF esterase family.

This is an uncharacterized protein from Saccharomyces cerevisiae (strain ATCC 204508 / S288c) (Baker's yeast).